Here is a 282-residue protein sequence, read N- to C-terminus: MDTRKNVSGAERKIWSLIRDCSGKLEGVTETSVLEVLLIVSRVLGIRKEDLFLKDLGVSPTEEKRILELVEKRASGYPLHYILGEKEFMGLSFLVEEGVFVPRPETEELVELALELIRKYGIKTVADIGTGSGAIGVSVAKFSDAIVFATDVSSKAVEIARKNAERHGVSDRFFVRKGEFLEPFKEKFASIEMILSNPPYVKSSAHLPKDVLFEPPEALFGGEDGLDFYREFFGRYDTSGKIVLMEIGEDQVEELKKIVSDTVFLKDSAGKYRFLLLNRRSS.

S-adenosyl-L-methionine contacts are provided by residues 129 to 133 (GTGSG), Asp151, Phe180, and Asn197. Residue 197–200 (NPPY) coordinates substrate.

It belongs to the protein N5-glutamine methyltransferase family. PrmC subfamily. In terms of assembly, monomer and homodimer.

It catalyses the reaction L-glutaminyl-[peptide chain release factor] + S-adenosyl-L-methionine = N(5)-methyl-L-glutaminyl-[peptide chain release factor] + S-adenosyl-L-homocysteine + H(+). Methylates the class 1 translation termination release factors RF1/PrfA and RF2/PrfB on the glutamine residue of the universally conserved GGQ motif. In Thermotoga maritima (strain ATCC 43589 / DSM 3109 / JCM 10099 / NBRC 100826 / MSB8), this protein is Release factor glutamine methyltransferase (prmC).